The primary structure comprises 157 residues: Transcription elongation factor GreB (157 aa).

It belongs to the GreA/GreB family. GreB subfamily.

Functionally, necessary for efficient RNA polymerase transcription elongation past template-encoded arresting sites. The arresting sites in DNA have the property of trapping a certain fraction of elongating RNA polymerases that pass through, resulting in locked ternary complexes. Cleavage of the nascent transcript by cleavage factors such as GreA or GreB allows the resumption of elongation from the new 3'terminus. GreB releases sequences of up to 9 nucleotides in length. The sequence is that of Transcription elongation factor GreB from Salmonella typhimurium (strain LT2 / SGSC1412 / ATCC 700720).